A 225-amino-acid polypeptide reads, in one-letter code: MAATQEDVKLLGIVGSPFVCRVQIALKLKGVEYKFLEENLGNKSDLLLKYNPVHKKVPVFVHNEQPIAESLVIVEYIDETWKNNPILPSDPYQRALARFWSKFIDDKIVGAVSKSVFTVDEKEREKNVEETYEALQFLENELKDKKFFGGEEFGLVDIAAVFIAFWIPIFQEIAGLQLFTSEKFPILYKWSQEFLNHPFVHEVLPPRDPLFAYFKARYESLSASK.

The region spanning 6–85 (EDVKLLGIVG…YIDETWKNNP (80 aa)) is the GST N-terminal domain. Glutathione is bound by residues S16, K43, V57, and 69–70 (ES). Residues 90 to 214 (DPYQRALARF…PPRDPLFAYF (125 aa)) enclose the GST C-terminal domain.

Belongs to the GST superfamily. HSP26 family.

It carries out the reaction RX + glutathione = an S-substituted glutathione + a halide anion + H(+). Functionally, may play a role in the cellular response to stress. The chain is Probable glutathione S-transferase (HSP26-A) from Glycine max (Soybean).